We begin with the raw amino-acid sequence, 485 residues long: Warthog protein 1 (485 aa).

An N-terminal signal peptide occupies residues 1 to 21; that stretch reads MMVMNPLTATFLAALIGTAAS. The segment at 236-258 is disordered; the sequence is DQRLSPSTDVQSDSYVSPTEADP. Residues 239–252 show a composition bias toward polar residues; that stretch reads LSPSTDVQSDSYVS.

Belongs to the hedgehog family. The C-terminal domain displays an autoproteolysis activity.

It is found in the secreted. It localises to the cell surface. The protein resides in the cell membrane. The protein localises to the extracellular space. Functionally, intercellular signal essential for a variety of patterning events during development. This Caenorhabditis elegans protein is Warthog protein 1 (wrt-1).